The sequence spans 145 residues: Protein cornichon homolog 1 (145 aa).

3 helical membrane-spanning segments follow: residues 5–25 (FAAF…FFAI), 57–77 (IIHG…SILA), and 116–136 (LRIS…YLYA).

This sequence belongs to the cornichon family. In terms of assembly, interacts with glr-1. As to expression, widely expressed in the nervous system including in the AVA interneurons.

Its subcellular location is the endoplasmic reticulum membrane. The protein resides in the synapse. The protein localises to the cell projection. It is found in the dendrite. In terms of biological role, negatively regulates export of glr-1 from the endoplasmic reticulum to synapses. In Caenorhabditis elegans, this protein is Protein cornichon homolog 1.